We begin with the raw amino-acid sequence, 231 residues long: Probable glutathione S-transferase GSTU1 (231 aa).

Positions 5 to 84 constitute a GST N-terminal domain; sequence KELVLLDFWV…YLDDAFPGTP (80 aa). Glutathione is bound by residues serine 15, lysine 42, isoleucine 56, and 68–69; that span reads ES. The 124-residue stretch at 97-220 folds into the GST C-terminal domain; the sequence is AAYARATARF…LPSPEKVYDF (124 aa).

The protein belongs to the GST superfamily. Tau family.

It carries out the reaction RX + glutathione = an S-substituted glutathione + a halide anion + H(+). Its function is as follows. Conjugation of reduced glutathione to a wide number of exogenous and endogenous hydrophobic electrophiles. The polypeptide is Probable glutathione S-transferase GSTU1 (GSTU1) (Oryza sativa subsp. indica (Rice)).